A 218-amino-acid chain; its full sequence is Adenylate kinase (218 aa).

Residue 10-15 (GAGKGT) participates in ATP binding. Positions 30–59 (STGDMLRAAIQAQTPLGLEAKKVMDDGKLV) are NMP. AMP-binding positions include Thr31, Arg36, 57 to 59 (KLV), 85 to 88 (GFPR), and Gln92. An LID region spans residues 122–159 (GRRVHLASGRTYHVIFNPPKKEGVDDITGEPLIQREDD). ATP contacts are provided by residues Arg123 and 132–133 (TY). Positions 156 and 167 each coordinate AMP. Gly203 is a binding site for ATP.

Belongs to the adenylate kinase family. In terms of assembly, monomer.

The protein localises to the cytoplasm. The catalysed reaction is AMP + ATP = 2 ADP. It functions in the pathway purine metabolism; AMP biosynthesis via salvage pathway; AMP from ADP: step 1/1. Catalyzes the reversible transfer of the terminal phosphate group between ATP and AMP. Plays an important role in cellular energy homeostasis and in adenine nucleotide metabolism. The chain is Adenylate kinase from Prosthecochloris aestuarii (strain DSM 271 / SK 413).